The chain runs to 163 residues: Augmin complex subunit wac (163 aa).

The stretch at 86–115 forms a coiled coil; the sequence is ELQRILSSIEEATRDVVMLERFNAAAEERL.

As to quaternary structure, component of the augmin complex composed of dgt2, dgt3, dgt4, dgt5, dgt6, msd1, msd5 and wac. The complex interacts directly or indirectly with microtubules and is required for centrosome-independent generation of spindle microtubules. wac interacts directly (via coiled coil) with dgt2. In terms of tissue distribution, in adult females, detected only in the abdomen with no expression in the head or thorax (at protein level).

Its subcellular location is the cytoplasm. The protein localises to the cytoskeleton. The protein resides in the spindle. It localises to the spindle pole. As part of the augmin complex, plays a role in centrosome-independent generation of spindle microtubules. The complex is required for mitotic spindle assembly through its involvement in localizing gamma-tubulin to spindle microtubules. wac is dispensable for somatic mitosis and for assembly of spindle microtubules in oocytes during female meiosis but is required during female meiosis for chromosome alignment and segregation. It is required for microtubule assembly near spindle poles in oocytes. It is also required for acentrosomal microtubule nucleation and meiotic spindle formation during male meiosis. wac binds to microtubules in vitro. In Drosophila melanogaster (Fruit fly), this protein is Augmin complex subunit wac.